Consider the following 257-residue polypeptide: Ubiquinone biosynthesis O-methyltransferase (257 aa).

S-adenosyl-L-methionine contacts are provided by R43, G77, D98, and M144.

This sequence belongs to the methyltransferase superfamily. UbiG/COQ3 family.

It carries out the reaction a 3-demethylubiquinol + S-adenosyl-L-methionine = a ubiquinol + S-adenosyl-L-homocysteine + H(+). It catalyses the reaction a 3-(all-trans-polyprenyl)benzene-1,2-diol + S-adenosyl-L-methionine = a 2-methoxy-6-(all-trans-polyprenyl)phenol + S-adenosyl-L-homocysteine + H(+). The protein operates within cofactor biosynthesis; ubiquinone biosynthesis. Functionally, O-methyltransferase that catalyzes the 2 O-methylation steps in the ubiquinone biosynthetic pathway. In Psychrobacter arcticus (strain DSM 17307 / VKM B-2377 / 273-4), this protein is Ubiquinone biosynthesis O-methyltransferase.